Reading from the N-terminus, the 93-residue chain is Small ribosomal subunit protein uS19 (93 aa).

The protein belongs to the universal ribosomal protein uS19 family.

Protein S19 forms a complex with S13 that binds strongly to the 16S ribosomal RNA. This chain is Small ribosomal subunit protein uS19, found in Alkaliphilus metalliredigens (strain QYMF).